The following is a 424-amino-acid chain: Formyl-CoA:oxalate CoA-transferase (424 aa).

CoA is bound by residues 17-18, Arg-38, 96-98, Arg-104, and 136-139; these read QS, NFA, and KVYE. The active-site Nucleophile is Asp-168. 247–249 contributes to the substrate binding site; sequence GGQ.

Belongs to the CoA-transferase III family. Frc subfamily. As to quaternary structure, homodimer.

It catalyses the reaction formyl-CoA + oxalate = oxalyl-CoA + formate. The protein operates within metabolic intermediate degradation; oxalate degradation; CO(2) and formate from oxalate: step 1/2. Functionally, involved in the catabolism of oxalate and in the adapatation to low pH via the induction of the oxalate-dependent acid tolerance response (ATR). Catalyzes the transfer of the CoA moiety from formyl-CoA to oxalate. The polypeptide is Formyl-CoA:oxalate CoA-transferase (Afipia carboxidovorans (strain ATCC 49405 / DSM 1227 / KCTC 32145 / OM5) (Oligotropha carboxidovorans)).